A 157-amino-acid polypeptide reads, in one-letter code: Transcriptional repressor NrdR (157 aa).

A zinc finger spans residues 3 to 34 (CPFCGFADTRVIDSRLGKEGNNIRRRRECSQC). Positions 49-139 (PLIIKKDARR…VYRQFKDINE (91 aa)) constitute an ATP-cone domain.

It belongs to the NrdR family. The cofactor is Zn(2+).

In terms of biological role, negatively regulates transcription of bacterial ribonucleotide reductase nrd genes and operons by binding to NrdR-boxes. This chain is Transcriptional repressor NrdR, found in Syntrophotalea carbinolica (strain DSM 2380 / NBRC 103641 / GraBd1) (Pelobacter carbinolicus).